We begin with the raw amino-acid sequence, 431 residues long: Serine/threonine-protein kinase Sgk1 (431 aa).

Positions Leu58 to Ala93 are disordered. The span at Gln81–Ala93 shows a compositional bias: polar residues. The Protein kinase domain maps to Phe98–Phe355. ATP contacts are provided by residues Ile104–Val112 and Lys127. Catalysis depends on Asp222, which acts as the Proton acceptor. Residues Ser356–Leu431 enclose the AGC-kinase C-terminal domain.

This sequence belongs to the protein kinase superfamily. AGC Ser/Thr protein kinase family.

It localises to the cytoplasm. The protein resides in the nucleus. The protein localises to the endoplasmic reticulum. It carries out the reaction L-seryl-[protein] + ATP = O-phospho-L-seryl-[protein] + ADP + H(+). It catalyses the reaction L-threonyl-[protein] + ATP = O-phospho-L-threonyl-[protein] + ADP + H(+). Its function is as follows. Protein kinase that may play an important role in cellular stress response. May be involved in the regulation of processes such as cell survival, neuronal excitability and renal sodium excretion. The chain is Serine/threonine-protein kinase Sgk1 (sgk1) from Fundulus heteroclitus (Killifish).